Here is a 341-residue protein sequence, read N- to C-terminus: GDT1-like protein 1, chloroplastic (341 aa).

The segment covering 1–13 (MASVASSTVFASS) has biased composition (low complexity). Disordered regions lie at residues 1–41 (MASV…GRSV) and 54–76 (VVTR…GGGR). Residues 1-57 (MASVASSTVFASSLPHHRATTRAPPTPPRIPRRARLPGRSVVSCLPKRGSEKLVVTR) constitute a chloroplast transit peptide. Helical transmembrane passes span 79-99 (PSLD…VLML), 117-137 (VVGD…LIFF), 158-178 (AIIF…SVVL), 203-223 (FLAA…AASG), 246-266 (GAGI…VFIA), 286-306 (LGVI…AVLG), and 318-338 (IVAY…LVEI).

Belongs to the GDT1 family.

The protein resides in the plastid. Its subcellular location is the chloroplast membrane. The sequence is that of GDT1-like protein 1, chloroplastic from Oryza sativa subsp. indica (Rice).